A 132-amino-acid polypeptide reads, in one-letter code: Small ribosomal subunit protein uS8 (132 aa).

Belongs to the universal ribosomal protein uS8 family. In terms of assembly, part of the 30S ribosomal subunit. Contacts proteins S5 and S12.

In terms of biological role, one of the primary rRNA binding proteins, it binds directly to 16S rRNA central domain where it helps coordinate assembly of the platform of the 30S subunit. The polypeptide is Small ribosomal subunit protein uS8 (Staphylococcus haemolyticus (strain JCSC1435)).